The primary structure comprises 165 residues: Protein SprT (165 aa).

In terms of domain architecture, SprT-like spans 10-158 (EACYRQAEHF…CRRCKATLVF (149 aa)). Residue H69 coordinates Zn(2+). E70 is a catalytic residue. H73 is a Zn(2+) binding site.

This sequence belongs to the SprT family. The cofactor is Zn(2+).

Its subcellular location is the cytoplasm. In Pseudomonas aeruginosa (strain UCBPP-PA14), this protein is Protein SprT.